The sequence spans 147 residues: Fibromodulin (147 aa).

LRR repeat units follow at residues 1 to 15, 16 to 37, 40 to 61, 63 to 84, 85 to 105, and 108 to 128; these read LDHN…PLPR, SLRE…ALEG, NLTA…MRGL, SLIL…LPSA, LEQL…YFRG, and KLLY…ASNT. N-linked (GlcNAc...) (keratan sulfate) asparagine glycosylation is present at N5. The N-linked (GlcNAc...) (keratan sulfate) asparagine glycan is linked to N40. N130 is a glycosylation site (N-linked (GlcNAc...) (keratan sulfate) asparagine). An LRR 7 repeat occupies 133-147; that stretch reads SLLELDLSYNQLQKI.

Belongs to the small leucine-rich proteoglycan (SLRP) family. SLRP class II subfamily. In terms of assembly, binds to type I and type II collagen. Post-translationally, binds keratan sulfate chains.

It is found in the secreted. The protein resides in the extracellular space. The protein localises to the extracellular matrix. In terms of biological role, affects the rate of fibrils formation. May have a primary role in collagen fibrillogenesis. This is Fibromodulin (FMOD) from Sus scrofa (Pig).